A 247-amino-acid chain; its full sequence is MSITIRELCNDTYHFVSKEIKIIIFISVLAAFISILINVLIKPNIHIISIIENKKFLSSHSIFDLINSMSIYEKKELLKYSIFKIFEFLISKTFLLGSIITLITHLSNHKKESIQFSLNSLCKFLPSLFILNFITTFFIQIGFMFFIFPGIFLSVLLALSPIILSFKKNNLIDCIRLSISISCKHLNIVGTSVLFWMCVKFILTTVFSNTYIISKNFIFLILNINMNIFFSILIVYLFRFYMLFLRS.

Helical transmembrane passes span 20–40, 82–102, 114–134, 137–157, 188–208, and 217–237; these read IKII…INVL, IFKI…IITL, IQFS…LNFI, FFIQ…SVLL, IVGT…TVFS, and FIFL…IVYL.

It belongs to the UPF0259 family.

It is found in the cell membrane. In Buchnera aphidicola subsp. Schizaphis graminum (strain Sg), this protein is UPF0259 membrane protein BUsg_265.